The following is a 366-amino-acid chain: Chorismate synthase (366 aa).

2 residues coordinate NADP(+): R48 and R54. FMN is bound by residues 125–127 (RSS), 238–239 (NA), G278, 293–297 (KPTSS), and R319.

Belongs to the chorismate synthase family. As to quaternary structure, homotetramer. The cofactor is FMNH2.

It carries out the reaction 5-O-(1-carboxyvinyl)-3-phosphoshikimate = chorismate + phosphate. It participates in metabolic intermediate biosynthesis; chorismate biosynthesis; chorismate from D-erythrose 4-phosphate and phosphoenolpyruvate: step 7/7. In terms of biological role, catalyzes the anti-1,4-elimination of the C-3 phosphate and the C-6 proR hydrogen from 5-enolpyruvylshikimate-3-phosphate (EPSP) to yield chorismate, which is the branch point compound that serves as the starting substrate for the three terminal pathways of aromatic amino acid biosynthesis. This reaction introduces a second double bond into the aromatic ring system. The polypeptide is Chorismate synthase (Ralstonia pickettii (strain 12J)).